Reading from the N-terminus, the 290-residue chain is 2-dehydropantoate 2-reductase (290 aa).

Residues 8–13 (GPGAVG), N98, and A124 each bind NADP(+). Residue N98 participates in substrate binding. K175 serves as the catalytic Proton donor. Substrate contacts are provided by N179 and S244. NADP(+) is bound at residue E256.

This sequence belongs to the ketopantoate reductase family.

Its subcellular location is the cytoplasm. It carries out the reaction (R)-pantoate + NADP(+) = 2-dehydropantoate + NADPH + H(+). The protein operates within cofactor biosynthesis; (R)-pantothenate biosynthesis; (R)-pantoate from 3-methyl-2-oxobutanoate: step 2/2. Its function is as follows. Catalyzes the NADPH-dependent reduction of ketopantoate into pantoic acid. The chain is 2-dehydropantoate 2-reductase from Caulobacter vibrioides (strain ATCC 19089 / CIP 103742 / CB 15) (Caulobacter crescentus).